The primary structure comprises 274 residues: MRAAGVGLVDCHCHLSAPDFDRDLDDVLEKAKKANVVALVAVAEHSGEFEKIMQLSERYNGFVLPCLGVHPVQGLPPEDQRSVTLKDLDVALPIIENYKDRLLAIGEVGLDFSPRFAGTGEQKEEQRQVLIRQIQLAKRLNLPVNVHSRSAGRPTINLLQEQGAEKVLLHAFDGRPSVAMEGVRAGYFFSIPPSIIRSGQKQKLVKQLPLTSICLETDSPALGPEKQVRNEPWNISISAEYIAQVKGISVEEVIEVTTQNALKLFPKLRHLLQK.

Zn(2+) contacts are provided by histidine 12, histidine 14, glutamate 107, histidine 147, histidine 170, and aspartate 218.

This sequence belongs to the metallo-dependent hydrolases superfamily. TatD-type hydrolase family. Requires Mn(2+) as cofactor. The cofactor is Ca(2+). It depends on Mg(2+) as a cofactor. Zn(2+) is required as a cofactor.

The protein localises to the nucleus. The 3'-exonuclease activity is sensitive to the metal ion present in the active site, whereas the AP endodeoxyribonuclease activity is observed in a variety of divalent metal cofactors. 3'-exoxonuclease activity is suppressed in the presence of Ca(2+), Zn(2+) and Ni(2+). Exhibits 3'-exonuclease activities and apurinic/apyrimidinic (AP) endonuclease (in vitro). Show preferential AP endonuclease activity on double-stranded DNA substrates and 3'- exonuclease activity on single-stranded DNA. The polypeptide is Deoxyribonuclease TATDN3 (TATDN3) (Homo sapiens (Human)).